Consider the following 801-residue polypeptide: U-box domain-containing protein 34 (801 aa).

The tract at residues 205–309 is disordered; sequence RSPTLPDPRQ…PETSRKSKKV (105 aa). Polar residues predominate over residues 236–254; that stretch reads LTCNKPKTPQSSKASSATT. Residues 289–309 show a composition bias toward basic and acidic residues; sequence VSEHRDSDRSPPETSRKSKKV. Residues 301–395 are a coiled coil; it reads ETSRKSKKVE…ETAKALLARE (95 aa). The 264-residue stretch at 442–705 folds into the Protein kinase domain; it reads FSPEKVIGEG…DLKSEVIPVL (264 aa). ATP-binding positions include 448–456 and Lys469; that span reads IGEGGYGKV. Catalysis depends on Asp564, which acts as the Proton acceptor. In terms of domain architecture, U-box spans 724–797; it reads RAPSHYFCPI…RDWKSRVRFS (74 aa).

Belongs to the protein kinase superfamily. Ser/Thr protein kinase family.

It catalyses the reaction L-seryl-[protein] + ATP = O-phospho-L-seryl-[protein] + ADP + H(+). The catalysed reaction is L-threonyl-[protein] + ATP = O-phospho-L-threonyl-[protein] + ADP + H(+). It carries out the reaction S-ubiquitinyl-[E2 ubiquitin-conjugating enzyme]-L-cysteine + [acceptor protein]-L-lysine = [E2 ubiquitin-conjugating enzyme]-L-cysteine + N(6)-ubiquitinyl-[acceptor protein]-L-lysine.. It participates in protein modification; protein ubiquitination. In terms of biological role, functions as an E3 ubiquitin ligase. In Arabidopsis thaliana (Mouse-ear cress), this protein is U-box domain-containing protein 34 (PUB34).